The following is a 158-amino-acid chain: Ribosomal RNA large subunit methyltransferase H (158 aa).

S-adenosyl-L-methionine is bound by residues leucine 72, glycine 103, and 122-127 (LGNLTL).

This sequence belongs to the RNA methyltransferase RlmH family. Homodimer.

It is found in the cytoplasm. The catalysed reaction is pseudouridine(1915) in 23S rRNA + S-adenosyl-L-methionine = N(3)-methylpseudouridine(1915) in 23S rRNA + S-adenosyl-L-homocysteine + H(+). Specifically methylates the pseudouridine at position 1915 (m3Psi1915) in 23S rRNA. The polypeptide is Ribosomal RNA large subunit methyltransferase H (Acidiphilium cryptum (strain JF-5)).